Reading from the N-terminus, the 323-residue chain is ATP synthase gamma chain (323 aa).

It belongs to the ATPase gamma chain family. In terms of assembly, F-type ATPases have 2 components, CF(1) - the catalytic core - and CF(0) - the membrane proton channel. CF(1) has five subunits: alpha(3), beta(3), gamma(1), delta(1), epsilon(1). CF(0) has three main subunits: a, b and c.

It localises to the cell membrane. Functionally, produces ATP from ADP in the presence of a proton gradient across the membrane. The gamma chain is believed to be important in regulating ATPase activity and the flow of protons through the CF(0) complex. This Nocardia farcinica (strain IFM 10152) protein is ATP synthase gamma chain.